Here is a 226-residue protein sequence, read N- to C-terminus: Ribose-5-phosphate isomerase A (226 aa).

Residues 26–29 (TGST), 82–85 (DGAD), and 95–98 (KGGG) contribute to the substrate site. Glu-104 serves as the catalytic Proton acceptor. Residue Lys-122 participates in substrate binding.

It belongs to the ribose 5-phosphate isomerase family. In terms of assembly, homodimer.

It carries out the reaction aldehydo-D-ribose 5-phosphate = D-ribulose 5-phosphate. It functions in the pathway carbohydrate degradation; pentose phosphate pathway; D-ribose 5-phosphate from D-ribulose 5-phosphate (non-oxidative stage): step 1/1. In terms of biological role, catalyzes the reversible conversion of ribose-5-phosphate to ribulose 5-phosphate. This Streptococcus thermophilus (strain CNRZ 1066) protein is Ribose-5-phosphate isomerase A.